The chain runs to 356 residues: Biotin synthase (356 aa).

The tract at residues methionine 1 to glutamate 28 is disordered. One can recognise a Radical SAM core domain in the interval glutamate 77–arginine 302. Residues cysteine 92, cysteine 96, and cysteine 99 each contribute to the [4Fe-4S] cluster site. Residues cysteine 135, cysteine 168, cysteine 227, and arginine 297 each coordinate [2Fe-2S] cluster.

This sequence belongs to the radical SAM superfamily. Biotin synthase family. In terms of assembly, homodimer. Requires [4Fe-4S] cluster as cofactor. [2Fe-2S] cluster serves as cofactor.

It catalyses the reaction (4R,5S)-dethiobiotin + (sulfur carrier)-SH + 2 reduced [2Fe-2S]-[ferredoxin] + 2 S-adenosyl-L-methionine = (sulfur carrier)-H + biotin + 2 5'-deoxyadenosine + 2 L-methionine + 2 oxidized [2Fe-2S]-[ferredoxin]. It participates in cofactor biosynthesis; biotin biosynthesis; biotin from 7,8-diaminononanoate: step 2/2. Functionally, catalyzes the conversion of dethiobiotin (DTB) to biotin by the insertion of a sulfur atom into dethiobiotin via a radical-based mechanism. The polypeptide is Biotin synthase (Arthrobacter sp. (strain FB24)).